The sequence spans 187 residues: Peptidyl-tRNA hydrolase (187 aa).

Position 15 (Y15) interacts with tRNA. The active-site Proton acceptor is H20. Residues F65, N67, and N113 each contribute to the tRNA site.

This sequence belongs to the PTH family. Monomer.

It localises to the cytoplasm. It carries out the reaction an N-acyl-L-alpha-aminoacyl-tRNA + H2O = an N-acyl-L-amino acid + a tRNA + H(+). Hydrolyzes ribosome-free peptidyl-tRNAs (with 1 or more amino acids incorporated), which drop off the ribosome during protein synthesis, or as a result of ribosome stalling. Its function is as follows. Catalyzes the release of premature peptidyl moieties from peptidyl-tRNA molecules trapped in stalled 50S ribosomal subunits, and thus maintains levels of free tRNAs and 50S ribosomes. The protein is Peptidyl-tRNA hydrolase of Elusimicrobium minutum (strain Pei191).